The following is a 161-amino-acid chain: Nucleotide-binding protein azo2183 (161 aa).

It belongs to the YajQ family.

Functionally, nucleotide-binding protein. The polypeptide is Nucleotide-binding protein azo2183 (Azoarcus sp. (strain BH72)).